A 561-amino-acid chain; its full sequence is DISARM protein DrmB (561 aa).

Its subcellular location is the cytoplasm. Its function is as follows. Component of antiviral defense system DISARM (defense island system associated with restriction-modification), composed of DrmE, DrmA, DrmB, DrmC and DrmMII. DISARM is probably a multi-gene restriction module, this subunit has an unknown function. Expression of DISARM in B.subtilis (strain BEST7003) confers resistance to phages Nf, phi29, phi105, phi3T, SPO1, SPR and SPP1. Protection is over 10(7)-fold against phi3T, 10(4)-10(5)-fold against Nf, phi29, phi105 and SPR, 100-fold against SPO1 and 10-fold against SPP1. DISARM does not interfere with phage adsorption, but instead interferes with (phi3T) DNA replication early in its cycle, preventing replication, circularization and lysogeny and probably causes phage DNA degradation (DNA is degraded in SPP1-infected cells). This Bacillus paralicheniformis (strain ATCC 9945a / NCIMB 11709 / CD-2) protein is DISARM protein DrmB.